The sequence spans 107 residues: ATP synthase subunit c (107 aa).

Transmembrane regions (helical) follow at residues 4 to 24, 29 to 49, and 74 to 94; these read IVFL…SMNQ, FSIL…AIGM, and MFIA…IALI.

Belongs to the ATPase C chain family. In terms of assembly, F-type ATPases have 2 components, F(1) - the catalytic core - and F(0) - the membrane proton channel. F(1) has five subunits: alpha(3), beta(3), gamma(1), delta(1), epsilon(1). F(0) has three main subunits: a(1), b(2) and c(10-14). The alpha and beta chains form an alternating ring which encloses part of the gamma chain. F(1) is attached to F(0) by a central stalk formed by the gamma and epsilon chains, while a peripheral stalk is formed by the delta and b chains.

It is found in the cell inner membrane. In terms of biological role, f(1)F(0) ATP synthase produces ATP from ADP in the presence of a proton or sodium gradient. F-type ATPases consist of two structural domains, F(1) containing the extramembraneous catalytic core and F(0) containing the membrane proton channel, linked together by a central stalk and a peripheral stalk. During catalysis, ATP synthesis in the catalytic domain of F(1) is coupled via a rotary mechanism of the central stalk subunits to proton translocation. Its function is as follows. Key component of the F(0) channel; it plays a direct role in translocation across the membrane. A homomeric c-ring of between 10-14 subunits forms the central stalk rotor element with the F(1) delta and epsilon subunits. The polypeptide is ATP synthase subunit c (Campylobacter lari (strain RM2100 / D67 / ATCC BAA-1060)).